A 404-amino-acid polypeptide reads, in one-letter code: Major outer membrane porin (404 aa).

An N-terminal signal peptide occupies residues 1–22 (MKKLLKSVLAFAVLGSASSLHA). Residues 85–110 (GPVPTTTDTDAAADITTSTPRENPAY) are disordered. Residues 89 to 103 (TTTDTDAAADITTST) are compositionally biased toward low complexity.

The protein belongs to the chlamydial porin (CP) (TC 1.B.2) family. Part of a disulfide cross-linked outer membrane complex (COMC) composed of the major outer membrane porin (MOMP), the small cysteine-rich protein (OmcA) and the large cysteine-rich periplasmic protein (OmcB).

It localises to the cell outer membrane. In terms of biological role, in elementary bodies (EBs, the infectious stage, which is able to survive outside the host cell) provides the structural integrity of the outer envelope through disulfide cross-links with the small cysteine-rich protein and the large cysteine-rich periplasmic protein. It has been described in publications as the Sarkosyl-insoluble COMC (Chlamydia outer membrane complex), and serves as the functional equivalent of peptidoglycan. Permits diffusion of specific solutes through the outer membrane. The sequence is that of Major outer membrane porin (ompA) from Chlamydia muridarum.